A 326-amino-acid polypeptide reads, in one-letter code: GTP 3',8-cyclase (326 aa).

The Radical SAM core domain occupies 5–227 (GHGRTVDYLR…ALGREGASPS (223 aa)). Arg-14 lines the GTP pocket. Residues Cys-21 and Cys-25 each coordinate [4Fe-4S] cluster. Tyr-27 is an S-adenosyl-L-methionine binding site. Cys-28 serves as a coordination point for [4Fe-4S] cluster. Arg-64 is a GTP binding site. Position 68 (Gly-68) interacts with S-adenosyl-L-methionine. Thr-95 contacts GTP. Ser-119 contacts S-adenosyl-L-methionine. Lys-155 is a GTP binding site. S-adenosyl-L-methionine is bound at residue Met-189. Residues Cys-250 and Cys-253 each contribute to the [4Fe-4S] cluster site. 255–257 (RIR) contacts GTP. Cys-267 contacts [4Fe-4S] cluster.

The protein belongs to the radical SAM superfamily. MoaA family. In terms of assembly, monomer and homodimer. [4Fe-4S] cluster serves as cofactor.

It catalyses the reaction GTP + AH2 + S-adenosyl-L-methionine = (8S)-3',8-cyclo-7,8-dihydroguanosine 5'-triphosphate + 5'-deoxyadenosine + L-methionine + A + H(+). The protein operates within cofactor biosynthesis; molybdopterin biosynthesis. In terms of biological role, catalyzes the cyclization of GTP to (8S)-3',8-cyclo-7,8-dihydroguanosine 5'-triphosphate. In Sulfurovum sp. (strain NBC37-1), this protein is GTP 3',8-cyclase.